Here is a 447-residue protein sequence, read N- to C-terminus: Tubulin beta chain (447 aa).

GTP is bound by residues Gln11, Glu69, Ser138, Gly142, Thr143, Gly144, Asn204, and Asn226. Glu69 is a binding site for Mg(2+). The interval 427–447 is disordered; that stretch reads EAHMDDEEAEEAYEDEAPPEE. Positions 430–447 are enriched in acidic residues; sequence MDDEEAEEAYEDEAPPEE.

Belongs to the tubulin family. In terms of assembly, dimer of alpha and beta chains. A typical microtubule is a hollow water-filled tube with an outer diameter of 25 nm and an inner diameter of 15 nM. Alpha-beta heterodimers associate head-to-tail to form protofilaments running lengthwise along the microtubule wall with the beta-tubulin subunit facing the microtubule plus end conferring a structural polarity. Microtubules usually have 13 protofilaments but different protofilament numbers can be found in some organisms and specialized cells. Mg(2+) is required as a cofactor.

The protein localises to the cytoplasm. It localises to the cytoskeleton. Tubulin is the major constituent of microtubules, a cylinder consisting of laterally associated linear protofilaments composed of alpha- and beta-tubulin heterodimers. Microtubules grow by the addition of GTP-tubulin dimers to the microtubule end, where a stabilizing cap forms. Below the cap, tubulin dimers are in GDP-bound state, owing to GTPase activity of alpha-tubulin. This chain is Tubulin beta chain (TBB1), found in Uromyces fabae (Rust fungus).